The following is a 106-amino-acid chain: SH3 domain-binding glutamic acid-rich-like protein 2-A (106 aa).

An SH3-binding motif is present at residues 61–67 (QGNPLPP).

This sequence belongs to the SH3BGR family.

It localises to the nucleus. This chain is SH3 domain-binding glutamic acid-rich-like protein 2-A (sh3bgrl2-a), found in Xenopus laevis (African clawed frog).